The chain runs to 436 residues: Trigger factor (436 aa).

Disordered stretches follow at residues 1–26 (MQVSVETTEGLGRRMTVQVPAERVEN) and 81–100 (QESLRPAGNPHIEPKRTGEG). Residues 161–246 (EDRVVIDFHG…VKRVEEPQLP (86 aa)) form the PPIase FKBP-type domain.

This sequence belongs to the FKBP-type PPIase family. Tig subfamily.

It is found in the cytoplasm. It catalyses the reaction [protein]-peptidylproline (omega=180) = [protein]-peptidylproline (omega=0). Its function is as follows. Involved in protein export. Acts as a chaperone by maintaining the newly synthesized protein in an open conformation. Functions as a peptidyl-prolyl cis-trans isomerase. In Halorhodospira halophila (strain DSM 244 / SL1) (Ectothiorhodospira halophila (strain DSM 244 / SL1)), this protein is Trigger factor.